The sequence spans 74 residues: Protein YkgV (74 aa).

The protein is Protein YkgV of Escherichia coli (strain K12).